The sequence spans 325 residues: MKFWYTKSWIAYLLLPFSFLFWLVSQCRRWLFQAGIIKSYRAPVPIVIVGNLSVGGNGKTPVVIWLVKALQQNGLRVGVISRGYGSQSAVYPLLVTEKTDPLEGGDEPVLIAQRTQVPVCISANRQQAIELLLQTQPCDVIVSDDGLQHYKLQRDFEIVVVDAQRGFGNGFVMPAGPLRELPSRLDSVDLVIANGKANRYSQTVMTLAADYAVNLVTKEKRLLTEFESGSAFAGIGNPQRFFTMLQGFGIQLKQTYEFQDHQKFSAELFAKFSKNEPHFMTEKDAVKCFPFARENWWYVPVEAKITGQSAVNFIENIVERVKNGQ.

Ser-53–Thr-60 provides a ligand contact to ATP.

Belongs to the LpxK family.

The enzyme catalyses a lipid A disaccharide + ATP = a lipid IVA + ADP + H(+). Its pathway is glycolipid biosynthesis; lipid IV(A) biosynthesis; lipid IV(A) from (3R)-3-hydroxytetradecanoyl-[acyl-carrier-protein] and UDP-N-acetyl-alpha-D-glucosamine: step 6/6. In terms of biological role, transfers the gamma-phosphate of ATP to the 4'-position of a tetraacyldisaccharide 1-phosphate intermediate (termed DS-1-P) to form tetraacyldisaccharide 1,4'-bis-phosphate (lipid IVA). The chain is Tetraacyldisaccharide 4'-kinase from Mannheimia succiniciproducens (strain KCTC 0769BP / MBEL55E).